Reading from the N-terminus, the 211-residue chain is LexA repressor (211 aa).

A DNA-binding region (H-T-H motif) is located at residues 27 to 47 (QTEIARAFGFKGVRAVQHHLD). Active-site for autocatalytic cleavage activity residues include Ser131 and Lys168.

This sequence belongs to the peptidase S24 family. As to quaternary structure, homodimer.

The catalysed reaction is Hydrolysis of Ala-|-Gly bond in repressor LexA.. Represses a number of genes involved in the response to DNA damage (SOS response), including recA and lexA. In the presence of single-stranded DNA, RecA interacts with LexA causing an autocatalytic cleavage which disrupts the DNA-binding part of LexA, leading to derepression of the SOS regulon and eventually DNA repair. This Xylella fastidiosa (strain 9a5c) protein is LexA repressor.